The primary structure comprises 247 residues: ATP synthase subunit a, chloroplastic (247 aa).

5 consecutive transmembrane segments (helical) span residues 38–58 (QVLITSWVVITILLGSVVIAV), 95–115 (VPFIGTMFLFIFVSNWSGALL), 134–154 (INTTVALALLTSAAYFYAGLS), 199–219 (LVVVVLVSLVPLVVPIPVMFL), and 220–240 (GLFTSGIQALIFATLAAAYIG).

Belongs to the ATPase A chain family. F-type ATPases have 2 components, CF(1) - the catalytic core - and CF(0) - the membrane proton channel. CF(1) has five subunits: alpha(3), beta(3), gamma(1), delta(1), epsilon(1). CF(0) has four main subunits: a, b, b' and c.

It is found in the plastid. The protein resides in the chloroplast thylakoid membrane. In terms of biological role, key component of the proton channel; it plays a direct role in the translocation of protons across the membrane. The sequence is that of ATP synthase subunit a, chloroplastic from Agrostis stolonifera (Creeping bentgrass).